The chain runs to 1032 residues: GPI inositol-deacylase (1032 aa).

N12 is a glycosylation site (N-linked (GlcNAc...) asparagine). Residues 15 to 35 traverse the membrane as a helical segment; the sequence is ILTLVSFFGLVLFYLTWYLYT. The active site involves S195. 2 N-linked (GlcNAc...) asparagine glycosylation sites follow: N520 and N555. Transmembrane regions (helical) follow at residues 703-723 and 740-760; these read LATI…QVKH and ICSP…TPIM. N-linked (GlcNAc...) asparagine glycosylation is present at N784. Helical transmembrane passes span 805 to 825, 861 to 880, and 884 to 903; these read LWFI…LTFY, WANR…PIYM, and FAYV…ILVA. N907 carries N-linked (GlcNAc...) asparagine glycosylation. The helical transmembrane segment at 916–936 threads the bilayer; sequence SLLMLMLWVLPINVPILVVFV. 2 N-linked (GlcNAc...) asparagine glycosylation sites follow: N938 and N942. 2 consecutive transmembrane segments (helical) span residues 943-963 and 985-1005; these read WTTP…ILLM and AFLA…TYWI.

The protein belongs to the GPI inositol-deacylase family.

It is found in the endoplasmic reticulum membrane. Its function is as follows. Involved in inositol deacylation of GPI-anchored proteins which plays important roles in the quality control and ER-associated degradation of GPI-anchored proteins. This chain is GPI inositol-deacylase (BST1), found in Debaryomyces hansenii (strain ATCC 36239 / CBS 767 / BCRC 21394 / JCM 1990 / NBRC 0083 / IGC 2968) (Yeast).